Reading from the N-terminus, the 258-residue chain is Homeobox protein VENTX (258 aa).

Positions 1-32 are enriched in polar residues; the sequence is MRLSSSPPRGPQQLSSFGSVDWLSQSSCSGPT. Disordered regions lie at residues 1-93 and 227-248; these read MRLS…RAPR and SHPP…PRGL. The segment at residues 91-150 is a DNA-binding region (homeobox); the sequence is APRVRTAFTMEQVRTLEGVFQHHQYLSPLERKRLAREMQLSEVQIKTWFQNRRMKHKRQM.

As to expression, expressed in bone marrow of patients recovering from chemotherapy. Also expressed in an erythroleukemia cell line.

It localises to the nucleus. Its function is as follows. May be involved in ventralization. The chain is Homeobox protein VENTX (VENTX) from Homo sapiens (Human).